The following is a 449-amino-acid chain: Cysteine--tRNA ligase (449 aa).

Cys30 contributes to the Zn(2+) binding site. Positions 32–42 (PTVYDRAHLGN) match the 'HIGH' region motif. Zn(2+)-binding residues include Cys210, His235, and Glu239. Residues 268 to 272 (KMSKS) carry the 'KMSKS' region motif. Lys271 serves as a coordination point for ATP.

Belongs to the class-I aminoacyl-tRNA synthetase family. In terms of assembly, monomer. Zn(2+) is required as a cofactor.

The protein localises to the cytoplasm. The enzyme catalyses tRNA(Cys) + L-cysteine + ATP = L-cysteinyl-tRNA(Cys) + AMP + diphosphate. The polypeptide is Cysteine--tRNA ligase (Acidiphilium cryptum (strain JF-5)).